We begin with the raw amino-acid sequence, 118 residues long: MPFVELETNLPASRIPAGLENRLCAATATILDKPEDRVSVTIRPGMTLLMNKSTEPCAHLLVSSIGVVGTAEQNRTHSASFFKFLTEELSLDQDRIVIRFFPLEAWQIGKKGTVMTFL.

P2 carries the post-translational modification N-acetylproline. K33 carries the post-translational modification N6-acetyllysine. A Phosphoserine modification is found at S90.

It belongs to the MIF family. As to quaternary structure, homotrimer.

It localises to the cytoplasm. The enzyme catalyses D-dopachrome + H(+) = 5,6-dihydroxyindole + CO2. Functionally, tautomerization of D-dopachrome with decarboxylation to give 5,6-dihydroxyindole (DHI). This Mus musculus (Mouse) protein is D-dopachrome decarboxylase (Ddt).